Consider the following 147-residue polypeptide: Peptide methionine sulfoxide reductase MsrB (147 aa).

In terms of domain architecture, MsrB spans 8–131 (KEELKKILTE…NSASLKFIPK (124 aa)). Catalysis depends on C120, which acts as the Nucleophile.

Belongs to the MsrB Met sulfoxide reductase family.

It carries out the reaction L-methionyl-[protein] + [thioredoxin]-disulfide + H2O = L-methionyl-(R)-S-oxide-[protein] + [thioredoxin]-dithiol. This is Peptide methionine sulfoxide reductase MsrB from Clostridium perfringens (strain SM101 / Type A).